The primary structure comprises 427 residues: Enolase (427 aa).

Position 163 (Gln-163) interacts with (2R)-2-phosphoglycerate. The active-site Proton donor is the Glu-205. Mg(2+) is bound by residues Asp-242, Glu-285, and Asp-312. 4 residues coordinate (2R)-2-phosphoglycerate: Lys-337, Arg-366, Ser-367, and Lys-388. Lys-337 functions as the Proton acceptor in the catalytic mechanism.

It belongs to the enolase family. Mg(2+) is required as a cofactor.

The protein resides in the cytoplasm. Its subcellular location is the secreted. It is found in the cell surface. It catalyses the reaction (2R)-2-phosphoglycerate = phosphoenolpyruvate + H2O. It participates in carbohydrate degradation; glycolysis; pyruvate from D-glyceraldehyde 3-phosphate: step 4/5. Functionally, catalyzes the reversible conversion of 2-phosphoglycerate (2-PG) into phosphoenolpyruvate (PEP). It is essential for the degradation of carbohydrates via glycolysis. The polypeptide is Enolase (Rhodopseudomonas palustris (strain TIE-1)).